The primary structure comprises 344 residues: Phenylalanine--tRNA ligase alpha subunit (344 aa).

Glutamate 256 serves as a coordination point for Mg(2+).

The protein belongs to the class-II aminoacyl-tRNA synthetase family. Phe-tRNA synthetase alpha subunit type 1 subfamily. As to quaternary structure, tetramer of two alpha and two beta subunits. It depends on Mg(2+) as a cofactor.

It localises to the cytoplasm. The enzyme catalyses tRNA(Phe) + L-phenylalanine + ATP = L-phenylalanyl-tRNA(Phe) + AMP + diphosphate + H(+). The chain is Phenylalanine--tRNA ligase alpha subunit from Geobacillus kaustophilus (strain HTA426).